Consider the following 191-residue polypeptide: Adenylate kinase (191 aa).

11–16 lines the ATP pocket; it reads GAGKGT. The tract at residues 31–60 is NMP; the sequence is STGDILRSNVAERSPLGIKAKDYMDKGDLV. AMP-binding positions include T32, R37, 58 to 60, 86 to 89, and Q93; these read DLV and GFPR. Positions 132-138 are LID; that stretch reads SRKREDD. Residue R133 participates in ATP binding. AMP is bound by residues R135 and R146. N174 is a binding site for ATP.

This sequence belongs to the adenylate kinase family. As to quaternary structure, monomer.

Its subcellular location is the cytoplasm. The enzyme catalyses AMP + ATP = 2 ADP. The protein operates within purine metabolism; AMP biosynthesis via salvage pathway; AMP from ADP: step 1/1. Functionally, catalyzes the reversible transfer of the terminal phosphate group between ATP and AMP. Plays an important role in cellular energy homeostasis and in adenine nucleotide metabolism. This Trichodesmium erythraeum (strain IMS101) protein is Adenylate kinase.